The following is a 304-amino-acid chain: Uricase (304 aa).

A2 is modified (N-acetylalanine). An N6-acetyllysine; alternate mark is found at K10 and K23. K10 and K23 each carry N6-succinyllysine; alternate. K23 serves as the catalytic Charge relay system. N6-acetyllysine occurs at positions 27 and 36. Phosphoserine occurs at positions 39 and 63. The active-site Charge relay system is the T68. Urate contacts are provided by T68 and D69. K118, K122, and K164 each carry N6-acetyllysine. Residue F170 participates in urate binding. N6-acetyllysine is present on residues K175 and K185. R187 contributes to the urate binding site. 2 positions are modified to N6-acetyllysine; alternate: K221 and K228. Residues K221 and K228 each carry the N6-succinyllysine; alternate modification. S232 is modified (phosphoserine). V235, Q236, and N262 together coordinate urate. H264 acts as the Charge relay system in catalysis. K278 is subject to N6-acetyllysine. Position 289 is a phosphotyrosine (Y289). Residues 302–304 (SRL) carry the Microbody targeting signal motif.

Belongs to the uricase family. In terms of assembly, homotetramer.

It localises to the peroxisome. It catalyses the reaction urate + O2 + H2O = 5-hydroxyisourate + H2O2. The protein operates within purine metabolism; urate degradation; (S)-allantoin from urate: step 1/3. In terms of biological role, catalyzes the oxidation of uric acid to 5-hydroxyisourate, which is further processed to form (S)-allantoin. The polypeptide is Uricase (UOX) (Bos taurus (Bovine)).